The following is a 504-amino-acid chain: Cytochrome P450 6B6 (504 aa).

Cys-445 lines the heme pocket.

This sequence belongs to the cytochrome P450 family. The cofactor is heme.

The protein localises to the endoplasmic reticulum membrane. The protein resides in the microsome membrane. It carries out the reaction an organic molecule + reduced [NADPH--hemoprotein reductase] + O2 = an alcohol + oxidized [NADPH--hemoprotein reductase] + H2O + H(+). The chain is Cytochrome P450 6B6 (CYP6B6) from Helicoverpa armigera (Cotton bollworm).